The following is a 260-amino-acid chain: Imidazole glycerol phosphate synthase subunit HisF (260 aa).

Catalysis depends on residues aspartate 11 and aspartate 130.

The protein belongs to the HisA/HisF family. As to quaternary structure, heterodimer of HisH and HisF.

The protein localises to the cytoplasm. The catalysed reaction is 5-[(5-phospho-1-deoxy-D-ribulos-1-ylimino)methylamino]-1-(5-phospho-beta-D-ribosyl)imidazole-4-carboxamide + L-glutamine = D-erythro-1-(imidazol-4-yl)glycerol 3-phosphate + 5-amino-1-(5-phospho-beta-D-ribosyl)imidazole-4-carboxamide + L-glutamate + H(+). It participates in amino-acid biosynthesis; L-histidine biosynthesis; L-histidine from 5-phospho-alpha-D-ribose 1-diphosphate: step 5/9. Its function is as follows. IGPS catalyzes the conversion of PRFAR and glutamine to IGP, AICAR and glutamate. The HisF subunit catalyzes the cyclization activity that produces IGP and AICAR from PRFAR using the ammonia provided by the HisH subunit. The protein is Imidazole glycerol phosphate synthase subunit HisF of Desulfatibacillum aliphaticivorans.